Here is a 65-residue protein sequence, read N- to C-terminus: Large ribosomal subunit protein uL29 (65 aa).

Belongs to the universal ribosomal protein uL29 family.

This chain is Large ribosomal subunit protein uL29, found in Syntrophus aciditrophicus (strain SB).